Reading from the N-terminus, the 469-residue chain is Aspartyl/glutamyl-tRNA(Asn/Gln) amidotransferase subunit B (469 aa).

Belongs to the GatB/GatE family. GatB subfamily. In terms of assembly, heterotrimer of A, B and C subunits.

The enzyme catalyses L-glutamyl-tRNA(Gln) + L-glutamine + ATP + H2O = L-glutaminyl-tRNA(Gln) + L-glutamate + ADP + phosphate + H(+). It carries out the reaction L-aspartyl-tRNA(Asn) + L-glutamine + ATP + H2O = L-asparaginyl-tRNA(Asn) + L-glutamate + ADP + phosphate + 2 H(+). Its function is as follows. Allows the formation of correctly charged Asn-tRNA(Asn) or Gln-tRNA(Gln) through the transamidation of misacylated Asp-tRNA(Asn) or Glu-tRNA(Gln) in organisms which lack either or both of asparaginyl-tRNA or glutaminyl-tRNA synthetases. The reaction takes place in the presence of glutamine and ATP through an activated phospho-Asp-tRNA(Asn) or phospho-Glu-tRNA(Gln). This Methanococcus aeolicus (strain ATCC BAA-1280 / DSM 17508 / OCM 812 / Nankai-3) protein is Aspartyl/glutamyl-tRNA(Asn/Gln) amidotransferase subunit B.